We begin with the raw amino-acid sequence, 1007 residues long: RNA-binding protein 26 (1007 aa).

Residue K94 forms a Glycyl lysine isopeptide (Lys-Gly) (interchain with G-Cter in SUMO2) linkage. A Glycyl lysine isopeptide (Lys-Gly) (interchain with G-Cter in SUMO1); alternate cross-link involves residue K106. A Glycyl lysine isopeptide (Lys-Gly) (interchain with G-Cter in SUMO2); alternate cross-link involves residue K106. Residues 106–118 are compositionally biased toward basic and acidic residues; that stretch reads KKEEITKEEEREK. Positions 106–241 are disordered; the sequence is KKEEITKEEE…YTPVSSVPSI (136 aa). A Phosphoserine modification is found at S127. The span at 134 to 168 shows a compositional bias: basic and acidic residues; it reads RYRENRSRDERKKDDRSRKRDYDRNPPRRDSYRDR. The segment covering 169–186 has biased composition (basic residues); sequence YNRRRGRSRSYSRSRSRS. 2 stretches are compositionally biased toward basic and acidic residues: residues 187 to 201 and 209 to 227; these read WSKE…DRSR and RSRE…RTDP. A compositionally biased stretch (polar residues) spans 228 to 241; the sequence is LENNYTPVSSVPSI. The segment at 288-316 adopts a C3H1-type zinc-finger fold; that stretch reads PMPKKRCRDYDEKGFCMRGDMCPFDHGSD. The span at 334-388 shows a compositional bias: pro residues; the sequence is QPPVVEGPPPPGLPPPPPILTPPPVNLRPPVPPPGPLPPSLPPVTGPPPPLPPLQ. Disordered stretches follow at residues 334–404 and 460–519; these read QPPV…SSVP and IGLT…TNSP. Residues 394–404 show a composition bias toward low complexity; sequence APPNSATSSVP. S496 bears the Phosphoserine mark. K510 is subject to N6-acetyllysine. At S518 the chain carries Phosphoserine. Residues 532–606 enclose the RRM 1 domain; that stretch reads TKLELRKVPP…RFIKVYWHRE (75 aa). S616 carries the post-translational modification Phosphoserine. Coiled coils occupy residues 719–795 and 823–847; these read DNNE…KAAS and KKMQ…EAAK. The disordered stretch occupies residues 853-884; it reads SGRGRGIHSRGRGAVHGRGRGRGRGRGVPGHA. Over residues 857-877 the composition is skewed to basic residues; the sequence is RGIHSRGRGAVHGRGRGRGRG. Residues 891–960 form the RRM 2 domain; sequence RALEISAFTE…QDLKLAWNKP (70 aa). Positions 966–1007 are disordered; the sequence is AVETEEVEPDEEEFQEESLVDDSLLQDDDEEEEDNESRSWRR. Residues 968-1000 are compositionally biased toward acidic residues; that stretch reads ETEEVEPDEEEFQEESLVDDSLLQDDDEEEEDN.

May be involved in the turnover of nuclear polyadenylated (pA+) RNA. In Homo sapiens (Human), this protein is RNA-binding protein 26.